The chain runs to 279 residues: MVIKAKSPAGFAEKYIIESIWNGRFPPGSILPAERELSELIGVTRTTLREVLQRLARDGWLTIQHGKPTKVNQFMETSGLHILDTLMTLDAENATSIVEDLLAARTNISPIFMRYAFKLNKESAERIMINVIESCEALVNAPSWDAFIAASPYAEKIQQHVKEDSEKDELKRQEILIAKTFNFYDYMLFQRLAFHSGNQIYGLIFNGLKKLYDRVGSYYFSNPQARELAMEFYRQLLAVCQSGEREHLPQVIRQYGIASGHIWNQMKMTLPSNFTEDDC.

The region spanning 6–74 (KSPAGFAEKY…HGKPTKVNQF (69 aa)) is the HTH gntR-type domain. Positions 34 to 53 (ERELSELIGVTRTTLREVLQ) form a DNA-binding region, H-T-H motif.

As to quaternary structure, homodimer.

The protein resides in the cytoplasm. Its function is as follows. Multifunctional regulator of fatty acid metabolism. The chain is Fatty acid metabolism regulator protein from Vibrio cholerae serotype O1 (strain ATCC 39541 / Classical Ogawa 395 / O395).